Consider the following 216-residue polypeptide: Putative flagellar filament outer layer-like protein (216 aa).

Positions 1-22 are disordered; sequence MFAQDAAQTGEQTTQNQGENGN. Positions 8–22 are enriched in low complexity; that stretch reads QTGEQTTQNQGENGN.

The protein localises to the periplasmic flagellum. The protein resides in the periplasm. In terms of biological role, might be part of the flagella. This chain is Putative flagellar filament outer layer-like protein (flaAL), found in Brachyspira hyodysenteriae (strain ATCC 49526 / WA1).